The following is a 250-amino-acid chain: 5'-nucleotidase SurE (250 aa).

4 residues coordinate a divalent metal cation: D8, D9, S40, and N95.

The protein belongs to the SurE nucleotidase family. A divalent metal cation is required as a cofactor.

It localises to the cytoplasm. It catalyses the reaction a ribonucleoside 5'-phosphate + H2O = a ribonucleoside + phosphate. Its function is as follows. Nucleotidase that shows phosphatase activity on nucleoside 5'-monophosphates. In Nitratidesulfovibrio vulgaris (strain DP4) (Desulfovibrio vulgaris), this protein is 5'-nucleotidase SurE.